Reading from the N-terminus, the 473-residue chain is Kynurenine 3-monooxygenase (473 aa).

The protein belongs to the aromatic-ring hydroxylase family. KMO subfamily. It depends on FAD as a cofactor.

The protein localises to the mitochondrion outer membrane. The enzyme catalyses L-kynurenine + NADPH + O2 + H(+) = 3-hydroxy-L-kynurenine + NADP(+) + H2O. Its pathway is cofactor biosynthesis; NAD(+) biosynthesis; quinolinate from L-kynurenine: step 1/3. Catalyzes the hydroxylation of L-kynurenine (L-Kyn) to form 3-hydroxy-L-kynurenine (L-3OHKyn). Required for synthesis of quinolinic acid. The polypeptide is Kynurenine 3-monooxygenase (Debaryomyces hansenii (strain ATCC 36239 / CBS 767 / BCRC 21394 / JCM 1990 / NBRC 0083 / IGC 2968) (Yeast)).